We begin with the raw amino-acid sequence, 102 residues long: Keratin-associated protein 25-1 (102 aa).

The protein belongs to the PMG family. In terms of assembly, interacts with hair keratins.

In the hair cortex, hair keratin intermediate filaments are embedded in an interfilamentous matrix, consisting of hair keratin-associated proteins (KRTAP), which are essential for the formation of a rigid and resistant hair shaft through their extensive disulfide bond cross-linking with abundant cysteine residues of hair keratins. The matrix proteins include the high-sulfur and high-glycine-tyrosine keratins. This Homo sapiens (Human) protein is Keratin-associated protein 25-1 (KRTAP25-1).